The following is a 238-amino-acid chain: MORN repeat-containing protein 3 (238 aa).

7 MORN repeats span residues 38 to 60 (YTGE…RRKS), 62 to 84 (YEGD…DSNT), 91 to 113 (YSGY…AKEY), 114 to 136 (YEGE…NGDI), 137 to 159 (YEGE…NENR), 160 to 182 (YEGS…NKGQ), and 184 to 205 (YEGV…GRTE).

It is found in the cytoplasmic vesicle. It localises to the secretory vesicle. The protein localises to the acrosome. Assembles a suppression complex (suppresome) by tethering SIRT1 and MDM2 to regulate composite modifications of p53/TP53. Confers both deacetylation-mediated functional inactivation, by SIRT1, and ubiquitination-dependent degradation, by MDM2, of p53/TP53, promoting a proliferative and cell survival behaviors. May play a role in the regulation of spermatogenesis. The protein is MORN repeat-containing protein 3 (morn3) of Xenopus laevis (African clawed frog).